The primary structure comprises 452 residues: Cytochrome b-c1 complex subunit 2, mitochondrial (452 aa).

A mitochondrion-targeting transit peptide spans 1-14; that stretch reads MKLLSRAGSFSRFY. An N6-acetyllysine mark is found at lysine 65, lysine 198, and lysine 249. Serine 367 is modified (phosphoserine).

This sequence belongs to the peptidase M16 family. UQCRC2/QCR2 subfamily. In terms of assembly, component of the ubiquinol-cytochrome c oxidoreductase (cytochrome b-c1 complex, complex III, CIII), a multisubunit enzyme composed of 11 subunits. The complex is composed of 3 respiratory subunits cytochrome b, cytochrome c1 and Rieske protein UQCRFS1, 2 core protein subunits UQCRC1/QCR1 and UQCRC2/QCR2, and 6 low-molecular weight protein subunits UQCRH/QCR6, UQCRB/QCR7, UQCRQ/QCR8, UQCR10/QCR9, UQCR11/QCR10 and subunit 9, the cleavage product of Rieske protein UQCRFS1. The complex exists as an obligatory dimer and forms supercomplexes (SCs) in the inner mitochondrial membrane with NADH-ubiquinone oxidoreductase (complex I, CI) and cytochrome c oxidase (complex IV, CIV), resulting in different assemblies (supercomplex SCI(1)III(2)IV(1) and megacomplex MCI(2)III(2)IV(2)). Interacts with RAB5IF. Interacts with STMP1. In terms of tissue distribution, expressed in the head region and flagellum of epididymal sperm.

Its subcellular location is the mitochondrion inner membrane. Its function is as follows. Component of the ubiquinol-cytochrome c oxidoreductase, a multisubunit transmembrane complex that is part of the mitochondrial electron transport chain which drives oxidative phosphorylation. The respiratory chain contains 3 multisubunit complexes succinate dehydrogenase (complex II, CII), ubiquinol-cytochrome c oxidoreductase (cytochrome b-c1 complex, complex III, CIII) and cytochrome c oxidase (complex IV, CIV), that cooperate to transfer electrons derived from NADH and succinate to molecular oxygen, creating an electrochemical gradient over the inner membrane that drives transmembrane transport and the ATP synthase. The cytochrome b-c1 complex catalyzes electron transfer from ubiquinol to cytochrome c, linking this redox reaction to translocation of protons across the mitochondrial inner membrane, with protons being carried across the membrane as hydrogens on the quinol. In the process called Q cycle, 2 protons are consumed from the matrix, 4 protons are released into the intermembrane space and 2 electrons are passed to cytochrome c. The 2 core subunits UQCRC1/QCR1 and UQCRC2/QCR2 are homologous to the 2 mitochondrial-processing peptidase (MPP) subunits beta-MPP and alpha-MPP respectively, and they seem to have preserved their MPP processing properties. May be involved in the in situ processing of UQCRFS1 into the mature Rieske protein and its mitochondrial targeting sequence (MTS)/subunit 9 when incorporated into complex III. The sequence is that of Cytochrome b-c1 complex subunit 2, mitochondrial (Uqcrc2) from Rattus norvegicus (Rat).